Here is a 400-residue protein sequence, read N- to C-terminus: Ornithine aminotransferase (400 aa).

K254 bears the N6-(pyridoxal phosphate)lysine mark.

The protein belongs to the class-III pyridoxal-phosphate-dependent aminotransferase family. OAT subfamily. Requires pyridoxal 5'-phosphate as cofactor.

It is found in the cytoplasm. It catalyses the reaction a 2-oxocarboxylate + L-ornithine = L-glutamate 5-semialdehyde + an L-alpha-amino acid. It functions in the pathway amino-acid biosynthesis; L-proline biosynthesis; L-glutamate 5-semialdehyde from L-ornithine: step 1/1. Catalyzes the interconversion of ornithine to glutamate semialdehyde. The protein is Ornithine aminotransferase of Exiguobacterium sp. (strain ATCC BAA-1283 / AT1b).